Consider the following 525-residue polypeptide: Serine/threonine-protein kinase YPK3 (525 aa).

Phosphoserine is present on residues serine 90 and serine 105. The residue at position 107 (threonine 107) is a Phosphothreonine. The Protein kinase domain maps to 128–424; that stretch reads FKPVRVLGQG…KTGANNKPTK (297 aa). Residues 134–142 and lysine 157 each bind ATP; that span reads LGQGAYGKV. Residues 170–193 are disordered; sequence ATDSKREDEDKNDGNNNDNDDGLS. Basic and acidic residues predominate over residues 172–182; the sequence is DSKREDEDKND. Aspartate 277 acts as the Proton acceptor in catalysis. Position 321 is a phosphoserine; by PKH1 or PKH2 (serine 321). An AGC-kinase C-terminal domain is found at 445 to 524; sequence RKIDWKLLES…KASGSYLEKY (80 aa). The residue at position 490 (threonine 490) is a Phosphothreonine; by TORC1. A Phosphoserine; by TORC1 modification is found at serine 513.

It belongs to the protein kinase superfamily. AGC Ser/Thr protein kinase family. S6 kinase subfamily. Post-translationally, phosphorylated by PKA in a TORC1-dependent manner. Phosphorylation at PKA consensus sites RRxS/T decreases upon rapamycin treatment.

Its subcellular location is the cytoplasm. It carries out the reaction L-seryl-[protein] + ATP = O-phospho-L-seryl-[protein] + ADP + H(+). The enzyme catalyses L-threonyl-[protein] + ATP = O-phospho-L-threonyl-[protein] + ADP + H(+). AGC kinase which plays a role in TOR complex 1 (TORC1) signaling pathway which mediates temporal control of cell growth in response to nutrients. Required for phosphorylation of ribosomal protein S6 (RPS6A/RPS6B) at 'Ser-232' and 'Ser-233'. The polypeptide is Serine/threonine-protein kinase YPK3 (Saccharomyces cerevisiae (strain ATCC 204508 / S288c) (Baker's yeast)).